The primary structure comprises 508 residues: Transcriptional regulatory protein moc3 (508 aa).

The interval asparagine 15–threonine 43 is disordered. Positions glycine 46–glycine 76 form a DNA-binding region, zn(2)-C6 fungal-type. Disordered regions lie at residues alanine 110 to threonine 146 and asparagine 174 to valine 193. Positions asparagine 176 to valine 193 are enriched in low complexity.

As to quaternary structure, interacts with zfs1.

Its subcellular location is the nucleus. Its function is as follows. Induces sexual development and ascus formation. Also involved in calcium homeostasis. This Schizosaccharomyces pombe (strain 972 / ATCC 24843) (Fission yeast) protein is Transcriptional regulatory protein moc3 (moc3).